We begin with the raw amino-acid sequence, 118 residues long: Large ribosomal subunit protein uL18 (118 aa).

It belongs to the universal ribosomal protein uL18 family. As to quaternary structure, part of the 50S ribosomal subunit; part of the 5S rRNA/L5/L18/L25 subcomplex. Contacts the 5S and 23S rRNAs.

In terms of biological role, this is one of the proteins that bind and probably mediate the attachment of the 5S RNA into the large ribosomal subunit, where it forms part of the central protuberance. This is Large ribosomal subunit protein uL18 from Rickettsia felis (strain ATCC VR-1525 / URRWXCal2) (Rickettsia azadi).